The primary structure comprises 644 residues: 1,4-alpha-glucan branching enzyme GlgB (644 aa).

The Nucleophile role is filled by Asp-309. The active-site Proton donor is Glu-362.

It belongs to the glycosyl hydrolase 13 family. GlgB subfamily. Monomer.

The enzyme catalyses Transfers a segment of a (1-&gt;4)-alpha-D-glucan chain to a primary hydroxy group in a similar glucan chain.. The protein operates within glycan biosynthesis; glycogen biosynthesis. Catalyzes the formation of the alpha-1,6-glucosidic linkages in glycogen by scission of a 1,4-alpha-linked oligosaccharide from growing alpha-1,4-glucan chains and the subsequent attachment of the oligosaccharide to the alpha-1,6 position. This is 1,4-alpha-glucan branching enzyme GlgB from Cutibacterium acnes (strain DSM 16379 / KPA171202) (Propionibacterium acnes).